The following is a 425-amino-acid chain: Transmembrane protein 184A (425 aa).

Helical transmembrane passes span 51 to 71, 96 to 116, 133 to 153, 189 to 209, 226 to 246, 261 to 281, and 303 to 323; these read LFLTSALARGVSGVFVWTALL, LLFIVPIYAFDSWLSLLLLGG, FVIYSFLTLCFQYLGGESAIM, TLQFCIVKPVMALITIILQAF, VTLVYNASVSLALYALFLFYF, FLTIKAIIFLSFWQGMLLAIL, and LAAGYQNFLICIEMLFASLAL. Positions 375–425 are disordered; that stretch reads QYTQQSTHEAPGPGQGGHPSPSTHPGPASGSGGGKKSRNIEKRMLIPSEDL. Residues 392–402 are compositionally biased toward low complexity; sequence HPSPSTHPGPA.

Belongs to the TMEM184 family. As to expression, expressed in vascular cells (at protein level).

The protein resides in the cell membrane. It localises to the cytoplasm. Its subcellular location is the perinuclear region. It is found in the early endosome membrane. The protein localises to the endosome. The protein resides in the cytoplasmic vesicle. It localises to the secretory vesicle membrane. Its subcellular location is the cytoplasmic vesicle membrane. Its function is as follows. Acts as a heparin receptor in vascular cells. May be involved in vesicle transport in exocrine cells and Sertoli cells. In Rattus norvegicus (Rat), this protein is Transmembrane protein 184A (Tmem184a).